Reading from the N-terminus, the 272-residue chain is HMP-PP phosphatase (272 aa).

The active-site Nucleophile is aspartate 8. The Mg(2+) site is built by aspartate 8, aspartate 10, and aspartate 212.

This sequence belongs to the HAD-like hydrolase superfamily. Cof family. Requires Mg(2+) as cofactor.

The enzyme catalyses 4-amino-2-methyl-5-(diphosphooxymethyl)pyrimidine + H2O = 4-amino-2-methyl-5-(phosphooxymethyl)pyrimidine + phosphate + H(+). Functionally, catalyzes the hydrolysis of 4-amino-2-methyl-5-hydroxymethylpyrimidine pyrophosphate (HMP-PP) to 4-amino-2-methyl-5-hydroxymethylpyrimidine phosphate (HMP-P). The polypeptide is HMP-PP phosphatase (Cronobacter sakazakii (strain ATCC BAA-894) (Enterobacter sakazakii)).